A 183-amino-acid chain; its full sequence is Glutathione-regulated potassium-efflux system ancillary protein KefG (183 aa).

This sequence belongs to the NAD(P)H dehydrogenase (quinone) family. KefG subfamily. As to quaternary structure, interacts with KefB.

The protein localises to the cell inner membrane. It catalyses the reaction a quinone + NADH + H(+) = a quinol + NAD(+). It carries out the reaction a quinone + NADPH + H(+) = a quinol + NADP(+). Its function is as follows. Regulatory subunit of a potassium efflux system that confers protection against electrophiles. Required for full activity of KefB. This Shigella flexneri serotype 5b (strain 8401) protein is Glutathione-regulated potassium-efflux system ancillary protein KefG.